Reading from the N-terminus, the 185-residue chain is Peptidyl-tRNA hydrolase (185 aa).

TRNA is bound at residue tyrosine 14. Residue histidine 19 is the Proton acceptor of the active site. 3 residues coordinate tRNA: tyrosine 64, asparagine 66, and asparagine 112.

Belongs to the PTH family. In terms of assembly, monomer.

It localises to the cytoplasm. It carries out the reaction an N-acyl-L-alpha-aminoacyl-tRNA + H2O = an N-acyl-L-amino acid + a tRNA + H(+). In terms of biological role, hydrolyzes ribosome-free peptidyl-tRNAs (with 1 or more amino acids incorporated), which drop off the ribosome during protein synthesis, or as a result of ribosome stalling. Functionally, catalyzes the release of premature peptidyl moieties from peptidyl-tRNA molecules trapped in stalled 50S ribosomal subunits, and thus maintains levels of free tRNAs and 50S ribosomes. The chain is Peptidyl-tRNA hydrolase from Shouchella clausii (strain KSM-K16) (Alkalihalobacillus clausii).